The following is a 137-amino-acid chain: uncharacterized protein (137 aa).

This is an uncharacterized protein from Frog virus 3 (isolate Goorha) (FV-3).